Here is a 394-residue protein sequence, read N- to C-terminus: Elongation factor Tu (394 aa).

One can recognise a tr-type G domain in the interval 10–204; the sequence is KPHINIGTIG…AVDDNIPTPE (195 aa). The interval 19–26 is G1; the sequence is GHVDHGKT. Residue 19–26 participates in GTP binding; it reads GHVDHGKT. Threonine 26 provides a ligand contact to Mg(2+). Positions 60–64 are G2; that stretch reads GITIN. A G3 region spans residues 81 to 84; sequence DCPG. GTP contacts are provided by residues 81-85 and 136-139; these read DCPGH and NKID. Residues 136–139 form a G4 region; sequence NKID. Residues 174–176 form a G5 region; the sequence is SAL.

This sequence belongs to the TRAFAC class translation factor GTPase superfamily. Classic translation factor GTPase family. EF-Tu/EF-1A subfamily. Monomer.

It localises to the cytoplasm. It catalyses the reaction GTP + H2O = GDP + phosphate + H(+). Functionally, GTP hydrolase that promotes the GTP-dependent binding of aminoacyl-tRNA to the A-site of ribosomes during protein biosynthesis. This is Elongation factor Tu from Chlamydia felis (strain Fe/C-56) (Chlamydophila felis).